Here is a 209-residue protein sequence, read N- to C-terminus: Large ribosomal subunit protein uL3 (209 aa).

This sequence belongs to the universal ribosomal protein uL3 family. As to quaternary structure, part of the 50S ribosomal subunit. Forms a cluster with proteins L14 and L19.

Its function is as follows. One of the primary rRNA binding proteins, it binds directly near the 3'-end of the 23S rRNA, where it nucleates assembly of the 50S subunit. The sequence is that of Large ribosomal subunit protein uL3 from Lactiplantibacillus plantarum (strain ATCC BAA-793 / NCIMB 8826 / WCFS1) (Lactobacillus plantarum).